A 195-amino-acid chain; its full sequence is ATP-dependent Clp protease proteolytic subunit (195 aa).

The active-site Nucleophile is Ser98. His123 is an active-site residue.

The protein belongs to the peptidase S14 family. In terms of assembly, fourteen ClpP subunits assemble into 2 heptameric rings which stack back to back to give a disk-like structure with a central cavity, resembling the structure of eukaryotic proteasomes.

It localises to the cytoplasm. The enzyme catalyses Hydrolysis of proteins to small peptides in the presence of ATP and magnesium. alpha-casein is the usual test substrate. In the absence of ATP, only oligopeptides shorter than five residues are hydrolyzed (such as succinyl-Leu-Tyr-|-NHMec, and Leu-Tyr-Leu-|-Tyr-Trp, in which cleavage of the -Tyr-|-Leu- and -Tyr-|-Trp bonds also occurs).. In terms of biological role, cleaves peptides in various proteins in a process that requires ATP hydrolysis. Has a chymotrypsin-like activity. Plays a major role in the degradation of misfolded proteins. The protein is ATP-dependent Clp protease proteolytic subunit of Wolinella succinogenes (strain ATCC 29543 / DSM 1740 / CCUG 13145 / JCM 31913 / LMG 7466 / NCTC 11488 / FDC 602W) (Vibrio succinogenes).